Consider the following 1130-residue polypeptide: MKRSEKPEGYRQMRPKTFPASNYTVSSRQMLQEIRESLRNLSKPSDAAKAEHNMSKMSTEDPRQVRNPPKFGTHHKALQEIRNSLLPFANETNSSRSTSEVNPQMLQDLQAAGFDEDMVIQALQKTNNRSIEAAIEFISKMSYQDPRREQMAAAAARPINASMKPGNVQQSVNRKQSWKGSKESLVPQRHGPPLGESVAYHSESPNSQTDVGRPLSGSGISAFVQAHPSNGQRVNPPPPPQVRSVTPPPPPRGQTPPPRGTTPPPPSWEPNSQTKRYSGNMEYVISRISPVPPGAWQEGYPPPPLNTSPMNPPNQGQRGISSVPVGRQPIIMQSSSKFNFPSGRPGMQNGTGQTDFMIHQNVVPAGTVNRQPPPPYPLTAANGQSPSALQTGGSAAPSSYTNGSIPQSMMVPNRNSHNMELYNISVPGLQTNWPQSSSAPAQSSPSSGHEIPTWQPNIPVRSNSFNNPLGNRASHSANSQPSATTVTAITPAPIQQPVKSMRVLKPELQTALAPTHPSWIPQPIQTVQPSPFPEGTASNVTVMPPVAEAPNYQGPPPPYPKHLLHQNPSVPPYESISKPSKEDQPSLPKEDESEKSYENVDSGDKEKKQITTSPITVRKNKKDEERRESRIQSYSPQAFKFFMEQHVENVLKSHQQRLHRKKQLENEMMRVGLSQDAQDQMRKMLCQKESNYIRLKRAKMDKSMFVKIKTLGIGAFGEVCLARKVDTKALYATKTLRKKDVLLRNQVAHVKAERDILAEADNEWVVRLYYSFQDKDNLYFVMDYIPGGDMMSLLIRMGIFPESLARFYIAELTCAVESVHKMGFIHRDIKPDNILIDRDGHIKLTDFGLCTGFRWTHDSKYYQSGDHPRQDSMDFSNEWGDPSSCRCGDRLKPLERRAARQHQRCLAHSLVGTPNYIAPEVLLRTGYTQLCDWWSVGVILFEMLVGQPPFLAQTPLETQMKVINWQTSLHIPPQAKLSPEASDLIIKLCRGPEDRLGKNGADEIKAHPFFKTIDFSSDLRQQSASYIPKITHPTDTSNFDPVDPDKLWSDDNEEENVNDTLNGWYKNGKHPEHAFYEFTFRRFFDDNGYPYNYPKPIEYEYINSQGSEQQSDEDDQNTGSEIKNRDLVYV.

Residues 1–11 (MKRSEKPEGYR) show a composition bias toward basic and acidic residues. Residues 1–71 (MKRSEKPEGY…PRQVRNPPKF (71 aa)) form a disordered region. A compositionally biased stretch (polar residues) spans 19–30 (PASNYTVSSRQM). Positions 46 to 64 (DAAKAEHNMSKMSTEDPRQ) are enriched in basic and acidic residues. One can recognise a UBA domain in the interval 100–141 (EVNPQMLQDLQAAGFDEDMVIQALQKTNNRSIEAAIEFISKM). Positions 149 to 276 (EQMAAAAARP…SWEPNSQTKR (128 aa)) are disordered. Positions 167–179 (NVQQSVNRKQSWK) are enriched in polar residues. Positions 235–268 (NPPPPPQVRSVTPPPPPRGQTPPPRGTTPPPPSW) are enriched in pro residues. Position 246 is a phosphothreonine (Thr-246). Ser-278 bears the Phosphoserine mark. Disordered regions lie at residues 294 to 321 (GAWQ…RGIS), 365 to 405 (AGTV…NGSI), 432 to 484 (NWPQ…PSAT), and 515 to 631 (THPS…ESRI). Residues 300 to 312 (YPPPPLNTSPMNP) show a composition bias toward pro residues. The short motif at 373–376 (PPPY) is the PPxY motif 1 element. Over residues 381–405 (ANGQSPSALQTGGSAAPSSYTNGSI) the composition is skewed to polar residues. The span at 434–447 (PQSSSAPAQSSPSS) shows a compositional bias: low complexity. Positions 454–482 (WQPNIPVRSNSFNNPLGNRASHSANSQPS) are enriched in polar residues. Position 464 is a phosphoserine; by NUAK1 and NUAK2 (Ser-464). Positions 526-655 (TVQPSPFPEG…HVENVLKSHQ (130 aa)) are interaction with YAP1. The PPxY motif 2 motif lies at 556-559 (PPPY). Residues 579-609 (PSKEDQPSLPKEDESEKSYENVDSGDKEKKQ) are compositionally biased toward basic and acidic residues. The residue at position 613 (Ser-613) is a Phosphoserine. Residues 621–630 (KKDEERRESR) show a composition bias toward basic and acidic residues. Ser-674 is modified (phosphoserine). Residues 705 to 1010 (FVKIKTLGIG…ADEIKAHPFF (306 aa)) form the Protein kinase domain. Residues 711–719 (LGIGAFGEV) and Lys-734 contribute to the ATP site. Asp-828 acts as the Proton acceptor in catalysis. The residue at position 909 (Ser-909) is a Phosphoserine; by STK3/MST2. The AGC-kinase C-terminal domain occupies 1011 to 1090 (KTIDFSSDLR…RRFFDDNGYP (80 aa)). Thr-1079 is modified (phosphothreonine; by STK3/MST2). A disordered region spans residues 1104 to 1130 (SQGSEQQSDEDDQNTGSEIKNRDLVYV).

It belongs to the protein kinase superfamily. AGC Ser/Thr protein kinase family. As to quaternary structure, complexes with CDK1 in early mitosis. LATS1-associated CDK1 has no mitotic cyclin partner and no apparent kinase activity. Binds phosphorylated ZYX, locating this protein to the mitotic spindle and suggesting a role for actin regulatory proteins during mitosis. Binds to and colocalizes with LIMK1 at the actomyosin contractile ring during cytokinesis. Interacts (via PPxY motif 2) with YAP1 (via WW domains). Interacts with MOB1A and MOB1B. Interacts with LIMD1, WTIP and AJUBA. Interacts with ESR1, DCAF1 and DCAF13; probably recruits DCAF1 and DCAF13 to ESR1 to promote ESR1 ubiquitination and ubiquitin-mediated proteasomal degradation. Interacts with STK3/MST2; this interaction is inhibited in the presence of DLG5. Interacts with SCRIB in the presence of DLG5. Interacts with WWTR1/TAZ. Interacts with WWC1, WWC2 and WWC3 (via their WW domains). Mg(2+) serves as cofactor. Autophosphorylated and phosphorylated during M-phase of the cell cycle. Phosphorylated by STK3/MST2 at Ser-909 and Thr-1079, which results in its activation. Phosphorylated by MAP4Ks; in parallel to STK3/MST2 and resulting to its activation. Phosphorylation at Ser-464 by NUAK1 and NUAK2 leads to decreased protein level and is required to regulate cellular senescence and cellular ploidy. Expressed in all adult tissues examined except for lung and kidney.

It is found in the cytoplasm. Its subcellular location is the cytoskeleton. The protein localises to the microtubule organizing center. It localises to the centrosome. The protein resides in the spindle. It is found in the midbody. Its subcellular location is the spindle pole body. The enzyme catalyses L-seryl-[protein] + ATP = O-phospho-L-seryl-[protein] + ADP + H(+). The catalysed reaction is L-threonyl-[protein] + ATP = O-phospho-L-threonyl-[protein] + ADP + H(+). Functionally, negative regulator of YAP1 in the Hippo signaling pathway that plays a pivotal role in organ size control and tumor suppression by restricting proliferation and promoting apoptosis. The core of this pathway is composed of a kinase cascade wherein STK3/MST2 and STK4/MST1, in complex with its regulatory protein SAV1, phosphorylates and activates LATS1/2 in complex with its regulatory protein MOB1, which in turn phosphorylates and inactivates YAP1 oncoprotein and WWTR1/TAZ. Phosphorylation of YAP1 by LATS1 inhibits its translocation into the nucleus to regulate cellular genes important for cell proliferation, cell death, and cell migration. Acts as a tumor suppressor which plays a critical role in maintenance of ploidy through its actions in both mitotic progression and the G1 tetraploidy checkpoint. Negatively regulates G2/M transition by down-regulating CDK1 kinase activity. Involved in the control of p53 expression. Affects cytokinesis by regulating actin polymerization through negative modulation of LIMK1. May also play a role in endocrine function. Plays a role in mammary gland epithelial cell differentiation, both through the Hippo signaling pathway and the intracellular estrogen receptor signaling pathway by promoting the degradation of ESR1. Acts as an activator of the NLRP3 inflammasome by mediating phosphorylation of 'Ser-265' of NLRP3 following NLRP3 palmitoylation, promoting NLRP3 activation by NEK7. This Homo sapiens (Human) protein is Serine/threonine-protein kinase LATS1.